The primary structure comprises 127 residues: UPF0325 protein VS_2356 (127 aa).

This sequence belongs to the UPF0325 family.

This is UPF0325 protein VS_2356 from Vibrio atlanticus (strain LGP32) (Vibrio splendidus (strain Mel32)).